A 1010-amino-acid chain; its full sequence is 2-oxoglutarate dehydrogenase-like, mitochondrial (1010 aa).

The transit peptide at 1-107 (MSQLRLLLFR…RASVSSCTKT (107 aa)) directs the protein to the mitochondrion. The tract at residues 28–47 (GGRRRSSGPPTTIPRSRGGV) is disordered. 3 residues coordinate Ca(2+): His130, Asp143, and Asp145. 5 residues coordinate thiamine diphosphate: Arg299, Asp398, Asn431, Ile433, and Gln663. Asp398, Asn431, and Ile433 together coordinate Mg(2+).

Belongs to the alpha-ketoglutarate dehydrogenase family. As to quaternary structure, the OGDHC complex comprises multiple copies of three catalytic enzyme components, the 2-oxoglutarate dehydrogenase (OGDH/E1), the dihydrolipoamide dehydrogenase (DLST/E2) and the dihydrolipoamide dehydrogenase (DLD/E3). OGDHL/E1-like isoenzyme may replace OGDH in the OGDHC complex in the brain. The presence of either ODGH/E1 or ODGHL/E1-like isoenzyme in the complex may depend on its tissular distribution. Requires thiamine diphosphate as cofactor. The cofactor is Mg(2+). As to expression, the OGDHL-containing OGDHC complex is present in the brain, but not in the heart.

The protein resides in the mitochondrion matrix. The catalysed reaction is N(6)-[(R)-lipoyl]-L-lysyl-[protein] + 2-oxoglutarate + H(+) = N(6)-[(R)-S(8)-succinyldihydrolipoyl]-L-lysyl-[protein] + CO2. Functionally, 2-oxoglutarate dehydrogenase (E1-like) component of the 2-oxoglutarate dehydrogenase multienzyme complex (OGDHC) which mediates the decarboxylation of alpha-ketoglutarate in the tricarboxylic acid cycle. The OGDHC complex catalyzes the overall conversion of 2-oxoglutarate to succinyl-CoA and CO(2) while reducing NAD(+) to NADH. The OGDHC complex is mainly active in the mitochondrion. Involved in the inhibition of cell proliferation and in apoptosis. The sequence is that of 2-oxoglutarate dehydrogenase-like, mitochondrial from Rattus norvegicus (Rat).